The chain runs to 62 residues: Large ribosomal subunit protein uL30 (62 aa).

Belongs to the universal ribosomal protein uL30 family. As to quaternary structure, part of the 50S ribosomal subunit.

The polypeptide is Large ribosomal subunit protein uL30 (Beutenbergia cavernae (strain ATCC BAA-8 / DSM 12333 / CCUG 43141 / JCM 11478 / NBRC 16432 / NCIMB 13614 / HKI 0122)).